The sequence spans 532 residues: MIPDCIPLAEVPHTTRLFADYLAHSAKLQAFYPALKYNQNLAAYTSSIQYQPGTRDRVATALQILNERLGASPEALANIERLRRGAYAVVSGQQVGLFGGPLLAVLKAAHAVRLARDLTAQGTDTIPVFWMASEDHDLAEVDHVFLPKNDFSLQRFTADATGTTGAPMSDLRFEPTIENLVQQTSELLGDSSLVDILRESYRPGETVAGAFGKLFARLFAKHGLVLLDPADTELHRIAAPLFRRAVAEAAEIARALVDRGKELEHAGYHEQVKVSASSVLLFGIQDGARVAIQRQNDHFSVGKEKLTQEELLARIDAEPEKFNANVLLRPVMQDTLLPTLAYIGGPAEVAYFAQGSVVYERLLGRATPILPRFSATLIEPKVEKLLEKYDLKFEDINHGADALAEKLAQKTLPPELDEQFRVALATVTQTMAQAKDALAKVDASLVEAAERATSKMRYQVGRLHRRAARAALRRTHVLSQHADLIVNALYPEKELQERTVGAAYFLAKYGLDLVDTLVDAAGTCPEHRVIRV.

Residues 431 to 451 (MAQAKDALAKVDASLVEAAER) are a coiled coil.

This sequence belongs to the BshC family.

The protein is Putative cysteine ligase BshC of Koribacter versatilis (strain Ellin345).